The following is a 248-amino-acid chain: Transcription termination/antitermination protein NusG (248 aa).

In terms of domain architecture, KOW spans Lys-197–Val-227.

This sequence belongs to the NusG family. In terms of assembly, monomer. Homodimer.

In terms of biological role, participates in transcription elongation, termination and antitermination. The protein is Transcription termination/antitermination protein NusG of Aquifex aeolicus (strain VF5).